Consider the following 409-residue polypeptide: LL-diaminopimelate aminotransferase (409 aa).

Substrate contacts are provided by Tyr15 and Gly42. Pyridoxal 5'-phosphate-binding positions include Tyr72, 108 to 109 (AK), Tyr132, Asn186, Tyr217, and 245 to 247 (SFS). Lys109, Tyr132, and Asn186 together coordinate substrate. The residue at position 248 (Lys248) is an N6-(pyridoxal phosphate)lysine. Pyridoxal 5'-phosphate-binding residues include Arg256 and Asn291. Positions 291 and 386 each coordinate substrate.

It belongs to the class-I pyridoxal-phosphate-dependent aminotransferase family. LL-diaminopimelate aminotransferase subfamily. Homodimer. It depends on pyridoxal 5'-phosphate as a cofactor.

The enzyme catalyses (2S,6S)-2,6-diaminopimelate + 2-oxoglutarate = (S)-2,3,4,5-tetrahydrodipicolinate + L-glutamate + H2O + H(+). Its pathway is amino-acid biosynthesis; L-lysine biosynthesis via DAP pathway; LL-2,6-diaminopimelate from (S)-tetrahydrodipicolinate (aminotransferase route): step 1/1. Its function is as follows. Involved in the synthesis of meso-diaminopimelate (m-DAP or DL-DAP), required for both lysine and peptidoglycan biosynthesis. Catalyzes the direct conversion of tetrahydrodipicolinate to LL-diaminopimelate. This is LL-diaminopimelate aminotransferase from Desulforapulum autotrophicum (strain ATCC 43914 / DSM 3382 / VKM B-1955 / HRM2) (Desulfobacterium autotrophicum).